We begin with the raw amino-acid sequence, 274 residues long: Undecaprenyl-diphosphatase 1 (274 aa).

7 consecutive transmembrane segments (helical) span residues Trp-8–Val-28, Ile-45–Ile-65, Phe-92–Phe-112, Leu-120–Ile-140, Phe-195–Ile-215, Ile-230–Met-250, and Gly-253–Leu-273.

Belongs to the UppP family.

Its subcellular location is the cell membrane. The catalysed reaction is di-trans,octa-cis-undecaprenyl diphosphate + H2O = di-trans,octa-cis-undecaprenyl phosphate + phosphate + H(+). Its function is as follows. Catalyzes the dephosphorylation of undecaprenyl diphosphate (UPP). Confers resistance to bacitracin. This is Undecaprenyl-diphosphatase 1 from Halalkalibacterium halodurans (strain ATCC BAA-125 / DSM 18197 / FERM 7344 / JCM 9153 / C-125) (Bacillus halodurans).